The primary structure comprises 400 residues: Phosphoribosylamine--glycine ligase (400 aa).

One can recognise an ATP-grasp domain in the interval 99-303 (KRFMKKYGIR…FVNAVLEGYR (205 aa)). ATP is bound at residue 125–186 (IKKFSPPYVI…DEFLAGNELS (62 aa)). Mg(2+) contacts are provided by E273 and N275.

This sequence belongs to the GARS family. Mg(2+) serves as cofactor. Requires Mn(2+) as cofactor.

The enzyme catalyses 5-phospho-beta-D-ribosylamine + glycine + ATP = N(1)-(5-phospho-beta-D-ribosyl)glycinamide + ADP + phosphate + H(+). Its pathway is purine metabolism; IMP biosynthesis via de novo pathway; N(1)-(5-phospho-D-ribosyl)glycinamide from 5-phospho-alpha-D-ribose 1-diphosphate: step 2/2. The sequence is that of Phosphoribosylamine--glycine ligase from Thermotoga maritima (strain ATCC 43589 / DSM 3109 / JCM 10099 / NBRC 100826 / MSB8).